The chain runs to 345 residues: Molybdopterin synthase catalytic subunit (345 aa).

Residues 101 to 102, K117, and 124 to 126 contribute to the substrate site; these read HR and KKE.

The protein belongs to the MoaE family. MOCS2B subfamily. Heterotetramer; composed of 2 small (Mocs2A) and 2 large (Mocs2B) subunits.

The protein resides in the cytoplasm. It carries out the reaction 2 [molybdopterin-synthase sulfur-carrier protein]-C-terminal-Gly-aminoethanethioate + cyclic pyranopterin phosphate + H2O = molybdopterin + 2 [molybdopterin-synthase sulfur-carrier protein]-C-terminal Gly-Gly + 2 H(+). It functions in the pathway cofactor biosynthesis; molybdopterin biosynthesis. Its function is as follows. Catalytic subunit of the molybdopterin synthase complex, a complex that catalyzes the conversion of precursor Z into molybdopterin. Acts by mediating the incorporation of 2 sulfur atoms from thiocarboxylated Mocs2A into precursor Z to generate a dithiolene group. This is Molybdopterin synthase catalytic subunit from Drosophila virilis (Fruit fly).